The sequence spans 159 residues: MAVKEVRLYLCPVPPSVALSVGDADADEPMIYFENITECLTDASCDKLACFAELKQEQALFMKKLYKHMVLKSDGAYNKHHVLFDLMVMYKTYVQLADESAFGSNVLHYCEQFITGAFEVFGLGSRVAVLVPPGWENDNLSVLLKHLHGLHLIAIDIVQ.

This is P18 protein (P18) from Orgyia pseudotsugata (Douglas-fir tussock moth).